A 381-amino-acid polypeptide reads, in one-letter code: S-adenosylmethionine synthase (381 aa).

Residue His15 participates in ATP binding. Asp17 is a Mg(2+) binding site. Glu43 lines the K(+) pocket. The L-methionine site is built by Glu56 and Gln99. Positions 99 to 109 (QSLDIAQGVDN) are flexible loop. ATP-binding positions include 164 to 166 (DGK), 230 to 231 (RF), Asp239, 245 to 246 (RK), and Lys266. Asp239 is an L-methionine binding site. Residue Lys270 coordinates L-methionine.

It belongs to the AdoMet synthase family. As to quaternary structure, homotetramer; dimer of dimers. Mg(2+) serves as cofactor. Requires K(+) as cofactor.

It is found in the cytoplasm. The catalysed reaction is L-methionine + ATP + H2O = S-adenosyl-L-methionine + phosphate + diphosphate. It participates in amino-acid biosynthesis; S-adenosyl-L-methionine biosynthesis; S-adenosyl-L-methionine from L-methionine: step 1/1. In terms of biological role, catalyzes the formation of S-adenosylmethionine (AdoMet) from methionine and ATP. The overall synthetic reaction is composed of two sequential steps, AdoMet formation and the subsequent tripolyphosphate hydrolysis which occurs prior to release of AdoMet from the enzyme. This is S-adenosylmethionine synthase from Legionella jeonii.